A 454-amino-acid polypeptide reads, in one-letter code: MAYDVIVKGAKAVRKGGTERADIAVKDGKIALIGPGIDENAEQVVQADGMYVFPGAVDCHVHFNEPGREEWEGIETGSNMLAAGGCTSYFDMPLNCIPSTVTAENLLAKAEIAERKSAVDFALWGGLMPGYTEHIRPMAEAGAIGFKAFLSKSGTDEFQSADERTLLKGMKEIAACGKVLALHAESDALTRFLEAEYALQGKIDVRAYASSRPEEAECEAVQRAIEYARATGCALHFVHISTKRAVLSIQQAKKDGLDVTVETCPHYLLFSFEDFLKKGAAAKCAPPLRSEADKEELIGVLAEGLIDMVSSDHSPCHPSLKREDNMFLSWGGISGGQFTLLGMIQLAIDHGIPFEHVARWTAEAPAKRFGLTNKGRLEEGFDADFAIVRPEPFTVTKETMFSKHKQSLYEGHTFPYRIAATYSKGRCVYQDGGRKQSGAFGTFLKPSEIKEPIL.

Zn(2+)-binding residues include His60, His62, Lys147, His183, His239, and Asp312. An N6-carboxylysine modification is found at Lys147.

This sequence belongs to the metallo-dependent hydrolases superfamily. Allantoinase family. Homotetramer. Zn(2+) is required as a cofactor. In terms of processing, carboxylation allows a single lysine to coordinate two zinc ions.

The catalysed reaction is (S)-allantoin + H2O = allantoate + H(+). It functions in the pathway nitrogen metabolism; (S)-allantoin degradation; allantoate from (S)-allantoin: step 1/1. In terms of biological role, catalyzes the conversion of allantoin (5-ureidohydantoin) to allantoic acid by hydrolytic cleavage of the five-member hydantoin ring. The chain is Allantoinase from Bacillus velezensis (strain DSM 23117 / BGSC 10A6 / LMG 26770 / FZB42) (Bacillus amyloliquefaciens subsp. plantarum).